The chain runs to 490 residues: Serine hydroxymethyltransferase, mitochondrial (490 aa).

A mitochondrion-targeting transit peptide spans 1 to 20 (MFPRASALAKCMATVHRRGL). N6-(pyridoxal phosphate)lysine is present on lysine 265.

It belongs to the SHMT family. As to quaternary structure, homotetramer. Interacts with NAP1. Pyridoxal 5'-phosphate serves as cofactor.

Its subcellular location is the mitochondrion. It carries out the reaction (6R)-5,10-methylene-5,6,7,8-tetrahydrofolate + glycine + H2O = (6S)-5,6,7,8-tetrahydrofolate + L-serine. The protein operates within one-carbon metabolism; tetrahydrofolate interconversion. In terms of biological role, interconversion of serine and glycine. This chain is Serine hydroxymethyltransferase, mitochondrial (SHM1), found in Saccharomyces cerevisiae (strain ATCC 204508 / S288c) (Baker's yeast).